A 176-amino-acid polypeptide reads, in one-letter code: Disulfide bond formation protein B (176 aa).

Topologically, residues 1 to 14 are cytoplasmic; sequence MLRFLNQCSRGRGA. A helical membrane pass occupies residues 15-31; sequence WLLMAFTALALEMVALW. Topologically, residues 32-49 are periplasmic; that stretch reads FQHVMLLKPCVLCIYERC. The cysteines at positions 41 and 44 are disulfide-linked. Residues 50 to 65 form a helical membrane-spanning segment; it reads ALFGVMGAGLVGAIAP. Residues 66 to 71 are Cytoplasmic-facing; sequence KTPLRY. The helical transmembrane segment at 72–89 threads the bilayer; sequence VAMVIWIYSAWRGLQLAY. The Periplasmic portion of the chain corresponds to 90-144; the sequence is EHTMIQLHPSPFMTCDFMARFPDWLPLGKWLPQVFVASGDCAERQWSFLTLEMPQ. The cysteines at positions 104 and 130 are disulfide-linked. Residues 145 to 163 traverse the membrane as a helical segment; sequence WLLGIFAAYLVVAIAVVIA. Topologically, residues 164-176 are cytoplasmic; sequence QAFKPKKRDLFGR.

Belongs to the DsbB family.

The protein localises to the cell inner membrane. In terms of biological role, required for disulfide bond formation in some periplasmic proteins. Acts by oxidizing the DsbA protein. This Salmonella paratyphi A (strain ATCC 9150 / SARB42) protein is Disulfide bond formation protein B.